The sequence spans 204 residues: Ras-related protein RabQ (204 aa).

12-19 is a GTP binding site; the sequence is GPPFVGKS. Residues 34 to 42 carry the Effector region motif; that stretch reads MDTTIGVEF. Residues 60–64 and 118–121 each bind GTP; these read DTAGQ and NKCD. S-geranylgeranyl cysteine attachment occurs at residues Cys-202 and Cys-203.

This sequence belongs to the small GTPase superfamily. Rab family.

The protein localises to the cell membrane. The sequence is that of Ras-related protein RabQ (rabQ) from Dictyostelium discoideum (Social amoeba).